Here is a 194-residue protein sequence, read N- to C-terminus: Protein GrpE (194 aa).

Residues Met1 to Asp40 are disordered. Residues Ala20–Glu38 show a composition bias toward low complexity.

Belongs to the GrpE family. Homodimer.

It localises to the cytoplasm. Functionally, participates actively in the response to hyperosmotic and heat shock by preventing the aggregation of stress-denatured proteins, in association with DnaK and GrpE. It is the nucleotide exchange factor for DnaK and may function as a thermosensor. Unfolded proteins bind initially to DnaJ; upon interaction with the DnaJ-bound protein, DnaK hydrolyzes its bound ATP, resulting in the formation of a stable complex. GrpE releases ADP from DnaK; ATP binding to DnaK triggers the release of the substrate protein, thus completing the reaction cycle. Several rounds of ATP-dependent interactions between DnaJ, DnaK and GrpE are required for fully efficient folding. In Chlorobaculum tepidum (strain ATCC 49652 / DSM 12025 / NBRC 103806 / TLS) (Chlorobium tepidum), this protein is Protein GrpE.